A 255-amino-acid chain; its full sequence is MRLIALPAFDDNYIWALVAADGRAIIVDPGQAAPVIATAEREGLVPSAILLTHHHGDHIDGVAELQQRWPGLELFSPADERIPTTAHHVSHGERLSLLAVDFQVIEVPGHTRTHIAFVTDRHLFSGDTLFSLGCGRMFEGTAPQMFDSLQRLACLPGETLVCCGHEYTLANAAFALHVDSTNAALQRRQQEAQAMRHAARPTLPISLKSELATNPFLRTNRPEIRAVVAARAAGALSSEVDVFAELRRWKDEFCL.

Zn(2+)-binding residues include His-53, His-55, Asp-57, His-58, His-110, Asp-127, and His-165.

The protein belongs to the metallo-beta-lactamase superfamily. Glyoxalase II family. As to quaternary structure, monomer. Requires Zn(2+) as cofactor.

It catalyses the reaction an S-(2-hydroxyacyl)glutathione + H2O = a 2-hydroxy carboxylate + glutathione + H(+). It functions in the pathway secondary metabolite metabolism; methylglyoxal degradation; (R)-lactate from methylglyoxal: step 2/2. Functionally, thiolesterase that catalyzes the hydrolysis of S-D-lactoyl-glutathione to form glutathione and D-lactic acid. In Xanthomonas oryzae pv. oryzae (strain MAFF 311018), this protein is Hydroxyacylglutathione hydrolase.